A 510-amino-acid chain; its full sequence is NAD(P)H-quinone oxidoreductase subunit 2, chloroplastic (510 aa).

12 helical membrane passes run 24–44, 59–79, 99–119, 124–144, 149–169, 183–203, 229–249, 295–315, 323–343, 347–367, 395–415, and 418–438; these read LLLFHGSFIFPECILIFGLIL, WFYFISSTSLVMSITALLFRW, IFQFLILLCSTLCIPLSVEYI, MAITEFLLFVLTATLGGMFLC, LITIFVAPECFSLCSYLLSGY, YLLMGGASSSILVHGFSWLYG, ISIALISITVGIGFKLSPAPF, WHLLLEILAILSMILGNLIAI, MLAYSSIGQIGYVIIGIIVGD, GYASMITYMLFYISMNLGTFA, ALSSALCLLSLGGLPPLAGFF, and LHLFWCGWQAGLYFLVSIGLL.

The protein belongs to the complex I subunit 2 family. As to quaternary structure, NDH is composed of at least 16 different subunits, 5 of which are encoded in the nucleus.

Its subcellular location is the plastid. It localises to the chloroplast thylakoid membrane. The catalysed reaction is a plastoquinone + NADH + (n+1) H(+)(in) = a plastoquinol + NAD(+) + n H(+)(out). It carries out the reaction a plastoquinone + NADPH + (n+1) H(+)(in) = a plastoquinol + NADP(+) + n H(+)(out). Functionally, NDH shuttles electrons from NAD(P)H:plastoquinone, via FMN and iron-sulfur (Fe-S) centers, to quinones in the photosynthetic chain and possibly in a chloroplast respiratory chain. The immediate electron acceptor for the enzyme in this species is believed to be plastoquinone. Couples the redox reaction to proton translocation, and thus conserves the redox energy in a proton gradient. In Yucca glauca (Soapweed yucca), this protein is NAD(P)H-quinone oxidoreductase subunit 2, chloroplastic.